The sequence spans 123 residues: Hydrogenase maturation factor HypA (123 aa).

Ni(2+) is bound at residue H2. Residues C73, C76, C90, and C93 each contribute to the Zn(2+) site.

It belongs to the HypA/HybF family.

In terms of biological role, involved in the maturation of [NiFe] hydrogenases. Required for nickel insertion into the metal center of the hydrogenase. The sequence is that of Hydrogenase maturation factor HypA from Roseiflexus sp. (strain RS-1).